We begin with the raw amino-acid sequence, 153 residues long: Transcriptional regulator MraZ (153 aa).

SpoVT-AbrB domains lie at 7–61 and 90–133; these read KEKH…LPDV and LEMV…EPGR.

Belongs to the MraZ family. In terms of assembly, forms oligomers.

It is found in the cytoplasm. It localises to the nucleoid. This chain is Transcriptional regulator MraZ, found in Chlorobium luteolum (strain DSM 273 / BCRC 81028 / 2530) (Pelodictyon luteolum).